Reading from the N-terminus, the 108-residue chain is Thioredoxin Asp f 28 (108 aa).

The region spanning 1-108 (MSHGKVIAVD…LEEMIKSISA (108 aa)) is the Thioredoxin domain. Active-site nucleophile residues include C33 and C36. A disulfide bridge links C33 with C36.

It belongs to the thioredoxin family.

Participates in various redox reactions through the reversible oxidation of its active center dithiol to a disulfide and catalyzes dithiol-disulfide exchange reactions. This chain is Thioredoxin Asp f 28, found in Aspergillus fumigatus (Neosartorya fumigata).